A 473-amino-acid polypeptide reads, in one-letter code: Arginine biosynthesis bifunctional protein ArgJ, mitochondrial (473 aa).

6 residues coordinate substrate: Thr201, Lys230, Thr241, Glu328, Asn468, and Thr473. The active-site Nucleophile is the Thr241.

This sequence belongs to the ArgJ family. As to quaternary structure, heterodimer of an alpha and a beta chain. The alpha and beta chains are autoproteolytically processed from a single precursor protein within the mitochondrion.

It is found in the mitochondrion matrix. It catalyses the reaction N(2)-acetyl-L-ornithine + L-glutamate = N-acetyl-L-glutamate + L-ornithine. It carries out the reaction L-glutamate + acetyl-CoA = N-acetyl-L-glutamate + CoA + H(+). Its pathway is amino-acid biosynthesis; L-arginine biosynthesis; L-ornithine and N-acetyl-L-glutamate from L-glutamate and N(2)-acetyl-L-ornithine (cyclic): step 1/1. The protein operates within amino-acid biosynthesis; L-arginine biosynthesis; N(2)-acetyl-L-ornithine from L-glutamate: step 1/4. In terms of biological role, catalyzes two activities which are involved in the cyclic version of arginine biosynthesis: the synthesis of acetylglutamate from glutamate and acetyl-CoA, and of ornithine by transacetylation between acetylornithine and glutamate. This is Arginine biosynthesis bifunctional protein ArgJ, mitochondrial from Blastomyces gilchristii (strain SLH14081) (Blastomyces dermatitidis).